A 426-amino-acid polypeptide reads, in one-letter code: Serine--tRNA ligase (426 aa).

Residues 1–15 (MIDVKDLSENPDKFR) show a composition bias toward basic and acidic residues. Positions 1–20 (MIDVKDLSENPDKFRASQRA) are disordered. Residue 228 to 230 (TSE) participates in L-serine binding. ATP-binding positions include 259–261 (RRE) and Val275. Glu282 is an L-serine binding site. Residue 346 to 349 (ELTS) participates in ATP binding. Thr386 provides a ligand contact to L-serine.

The protein belongs to the class-II aminoacyl-tRNA synthetase family. Type-1 seryl-tRNA synthetase subfamily. As to quaternary structure, homodimer. The tRNA molecule binds across the dimer.

The protein localises to the cytoplasm. It carries out the reaction tRNA(Ser) + L-serine + ATP = L-seryl-tRNA(Ser) + AMP + diphosphate + H(+). The catalysed reaction is tRNA(Sec) + L-serine + ATP = L-seryl-tRNA(Sec) + AMP + diphosphate + H(+). Its pathway is aminoacyl-tRNA biosynthesis; selenocysteinyl-tRNA(Sec) biosynthesis; L-seryl-tRNA(Sec) from L-serine and tRNA(Sec): step 1/1. In terms of biological role, catalyzes the attachment of serine to tRNA(Ser). Is also able to aminoacylate tRNA(Sec) with serine, to form the misacylated tRNA L-seryl-tRNA(Sec), which will be further converted into selenocysteinyl-tRNA(Sec). The protein is Serine--tRNA ligase of Paenarthrobacter aurescens (strain TC1).